Consider the following 141-residue polypeptide: Protein C19orf12 homolog (141 aa).

A helical transmembrane segment spans residues 33–53 (LVAAAGAFLGGLVGGPPGIAV).

It belongs to the C19orf12 family.

Its subcellular location is the mitochondrion. The protein localises to the mitochondrion membrane. It is found in the endoplasmic reticulum. The protein resides in the cytoplasm. It localises to the cytosol. This chain is Protein C19orf12 homolog, found in Xenopus tropicalis (Western clawed frog).